We begin with the raw amino-acid sequence, 75 residues long: Defensin-like protein 58 (75 aa).

The first 23 residues, 1 to 23 (MNITKRYVVIFFLVMLTKSLSNS), serve as a signal peptide directing secretion. 4 disulfides stabilise this stretch: cysteine 39/cysteine 73, cysteine 43/cysteine 66, cysteine 52/cysteine 71, and cysteine 56/cysteine 72.

This sequence belongs to the DEFL family.

Its subcellular location is the secreted. The chain is Defensin-like protein 58 from Arabidopsis thaliana (Mouse-ear cress).